We begin with the raw amino-acid sequence, 248 residues long: Ribosomal RNA small subunit methyltransferase J (248 aa).

S-adenosyl-L-methionine contacts are provided by residues 98–99, 114–115, 150–151, and Asp-168; these read RD, ER, and SS.

Belongs to the methyltransferase superfamily. RsmJ family.

Its subcellular location is the cytoplasm. It carries out the reaction guanosine(1516) in 16S rRNA + S-adenosyl-L-methionine = N(2)-methylguanosine(1516) in 16S rRNA + S-adenosyl-L-homocysteine + H(+). In terms of biological role, specifically methylates the guanosine in position 1516 of 16S rRNA. The sequence is that of Ribosomal RNA small subunit methyltransferase J from Shewanella baltica (strain OS185).